Reading from the N-terminus, the 259-residue chain is Acetylglutamate kinase (259 aa).

Substrate is bound by residues 45-46 (GG), Arg-67, and Asn-159.

This sequence belongs to the acetylglutamate kinase family. ArgB subfamily.

It localises to the cytoplasm. It catalyses the reaction N-acetyl-L-glutamate + ATP = N-acetyl-L-glutamyl 5-phosphate + ADP. It functions in the pathway amino-acid biosynthesis; L-arginine biosynthesis; N(2)-acetyl-L-ornithine from L-glutamate: step 2/4. Its function is as follows. Catalyzes the ATP-dependent phosphorylation of N-acetyl-L-glutamate. This Aeromonas salmonicida (strain A449) protein is Acetylglutamate kinase.